A 505-amino-acid polypeptide reads, in one-letter code: Histidine ammonia-lyase (505 aa).

A cross-link (5-imidazolinone (Ala-Gly)) is located at residues 141–143 (ASG). Residue Ser-142 is modified to 2,3-didehydroalanine (Ser).

It belongs to the PAL/histidase family. Contains an active site 4-methylidene-imidazol-5-one (MIO), which is formed autocatalytically by cyclization and dehydration of residues Ala-Ser-Gly.

It localises to the cytoplasm. The catalysed reaction is L-histidine = trans-urocanate + NH4(+). It functions in the pathway amino-acid degradation; L-histidine degradation into L-glutamate; N-formimidoyl-L-glutamate from L-histidine: step 1/3. This Bacillus cereus (strain AH187) protein is Histidine ammonia-lyase.